Reading from the N-terminus, the 324-residue chain is Methionyl-tRNA formyltransferase (324 aa).

Position 114–117 (114–117) interacts with (6S)-5,6,7,8-tetrahydrofolate; it reads SLLP.

This sequence belongs to the Fmt family.

The enzyme catalyses L-methionyl-tRNA(fMet) + (6R)-10-formyltetrahydrofolate = N-formyl-L-methionyl-tRNA(fMet) + (6S)-5,6,7,8-tetrahydrofolate + H(+). Its function is as follows. Attaches a formyl group to the free amino group of methionyl-tRNA(fMet). The formyl group appears to play a dual role in the initiator identity of N-formylmethionyl-tRNA by promoting its recognition by IF2 and preventing the misappropriation of this tRNA by the elongation apparatus. The protein is Methionyl-tRNA formyltransferase of Phocaeicola vulgatus (strain ATCC 8482 / DSM 1447 / JCM 5826 / CCUG 4940 / NBRC 14291 / NCTC 11154) (Bacteroides vulgatus).